Here is a 1000-residue protein sequence, read N- to C-terminus: C2 domain-containing protein 5 (1000 aa).

The C2 domain occupies 1-109 (MPGKLKVKIV…EAATVISGWF (109 aa)). Ca(2+) is bound by residues Asp19, Asp26, Asp76, Asp78, Ser81, and Asp84. Phosphoserine; by PKB/AKT2 is present on Ser197. Phosphoserine occurs at positions 200 and 260. A disordered region spans residues 265 to 330 (MKEIPFNEDP…SGSAGKEGGP (66 aa)). Residues 274–289 (PNPNTHSSGPSTPLKN) are compositionally biased toward polar residues. Over residues 290–318 (QTYSFSPSKSYSRQSSSSDTDLSLTPKTG) the composition is skewed to low complexity. Ser293, Ser295, Ser304, Ser305, and Ser306 each carry phosphoserine. Phosphothreonine is present on Thr317. Positions 319-328 (MGSGSAGKEG) are enriched in gly residues. Ser323 carries the post-translational modification Phosphoserine. Thr601 carries the post-translational modification Phosphothreonine. The tract at residues 639–669 (EIIGSPIPEPRQRSRLLRSQSESSDEVTELD) is disordered. A phosphoserine mark is found at Ser643, Ser657, Ser659, Ser661, and Ser662. Thr666 carries the phosphothreonine modification. Ser671 bears the Phosphoserine mark. Position 807 is a phosphothreonine (Thr807). Residues Ser817 and Ser852 each carry the phosphoserine modification.

Ca(2+) is required as a cofactor. Phosphorylated on Ser-197 by active myristoylated kinase AKT2; insulin-stimulated phosphorylation by AKT2 regulates SLC2A4/GLUT4 translocation into the plasma membrane.

It localises to the cytoplasmic vesicle membrane. Its subcellular location is the cytoplasm. The protein resides in the cell cortex. It is found in the cell membrane. The protein localises to the cell projection. It localises to the ruffle. Functionally, required for insulin-stimulated glucose transport and glucose transporter SLC2A4/GLUT4 translocation from intracellular glucose storage vesicle (GSV) to the plasma membrane (PM) in adipocytes. Binds phospholipid membranes in a calcium-dependent manner and is necessary for the optimal membrane fusion between SLC2A4/GLUT4 GSV and the PM. The polypeptide is C2 domain-containing protein 5 (C2CD5) (Pongo abelii (Sumatran orangutan)).